A 422-amino-acid chain; its full sequence is ORC1-type DNA replication protein 13 (422 aa).

Residues 80–84 (TGKTL), Tyr-231, and Arg-243 contribute to the ATP site.

It belongs to the CDC6/cdc18 family.

Its function is as follows. Involved in regulation of DNA replication. In Haloarcula marismortui (strain ATCC 43049 / DSM 3752 / JCM 8966 / VKM B-1809) (Halobacterium marismortui), this protein is ORC1-type DNA replication protein 13 (cdc6m).